The chain runs to 112 residues: Small ribosomal subunit protein bS6 (112 aa).

This sequence belongs to the bacterial ribosomal protein bS6 family.

Functionally, binds together with bS18 to 16S ribosomal RNA. This Christiangramia forsetii (strain DSM 17595 / CGMCC 1.15422 / KT0803) (Gramella forsetii) protein is Small ribosomal subunit protein bS6.